The chain runs to 466 residues: Ribulose bisphosphate carboxylase large chain (466 aa).

Position 4 is an N6,N6,N6-trimethyllysine (Lys-4). Residues Asn-113 and Thr-163 each contribute to the substrate site. Lys-165 serves as the catalytic Proton acceptor. Position 167 (Lys-167) interacts with substrate. Positions 191, 193, and 194 each coordinate Mg(2+). Lys-191 is modified (N6-carboxylysine). The active-site Proton acceptor is the His-284. The substrate site is built by Arg-285, His-317, and Ser-369.

Belongs to the RuBisCO large chain family. Type I subfamily. In terms of assembly, heterohexadecamer of 8 large chains and 8 small chains; disulfide-linked. The disulfide link is formed within the large subunit homodimers. Mg(2+) is required as a cofactor. The disulfide bond which can form in the large chain dimeric partners within the hexadecamer appears to be associated with oxidative stress and protein turnover.

The protein resides in the plastid. The protein localises to the chloroplast. It carries out the reaction 2 (2R)-3-phosphoglycerate + 2 H(+) = D-ribulose 1,5-bisphosphate + CO2 + H2O. The catalysed reaction is D-ribulose 1,5-bisphosphate + O2 = 2-phosphoglycolate + (2R)-3-phosphoglycerate + 2 H(+). Functionally, ruBisCO catalyzes two reactions: the carboxylation of D-ribulose 1,5-bisphosphate, the primary event in carbon dioxide fixation, as well as the oxidative fragmentation of the pentose substrate in the photorespiration process. Both reactions occur simultaneously and in competition at the same active site. The protein is Ribulose bisphosphate carboxylase large chain of Proboscidea louisianica (Louisiana Devil's-claw).